The following is a 92-amino-acid chain: Trp operon repressor homolog (92 aa).

Residues 56 to 79 mediate DNA binding; it reads QREVASKLGVSITKITRGAANLQD.

It belongs to the TrpR family. As to quaternary structure, homodimer.

Its subcellular location is the cytoplasm. Functionally, this protein is an aporepressor. When complexed with L-tryptophan it binds the operator region of the trp operon and prevents the initiation of transcription. The protein is Trp operon repressor homolog of Xylella fastidiosa (strain M23).